We begin with the raw amino-acid sequence, 103 residues long: Iron-sulfur cluster assembly protein CyaY (103 aa).

Belongs to the frataxin family.

Its function is as follows. Involved in iron-sulfur (Fe-S) cluster assembly. May act as a regulator of Fe-S biogenesis. The protein is Iron-sulfur cluster assembly protein CyaY of Rickettsia rickettsii (strain Iowa).